A 438-amino-acid polypeptide reads, in one-letter code: MALESVWAPQAAVIGDGLSERVGEQASPQTQVLQTASLKDGPAKRAVWVRRDHSEPEPTTSPEVKKPKLELTKAVVVDLGTGYCKCGFAGLPKPTHRISTTVGKPYMETAKTGDNRKETFVGHELINPEVRLKLINPLRHGIIVDWDTVQDIWEYLFHQEMKIAPEEHAVLVSDPPLSPHTNREKYAEMLFETFKTPAMHIAYQSRLSMYSYGRTSGLVVEVGHGVSYVVPIYEGYPLPSITGRLDYAGSDLTTYLMCLMNTAGKHFTEGQLGIVEDIKKKCCFVALDPIEEKKVPATEHMIQYTLPDGQAIYLCQERFLCSEMFFKPSLIKSMQLGLHTQTVSCLNKCDIALKRDLMGNILLCGGSTMLSGFPNRLQKELSSMCPNDTPQVSVLPERDTAVWTGGSILASLQGFQPLWVHRSEYEEHGPFFLYRRCF.

Residues 36–56 (ASLKDGPAKRAVWVRRDHSEP) form a required for interaction with TES region.

Belongs to the actin family. In terms of assembly, interacts (via N-terminus) with TES (via LIM domain 2). Heterodimer with TES; the heterodimer interacts with ENAH to form a heterotrimer. Interacts with ACTL9. Interacts with CYLC1; the interaction may be relevant for proper acrosome attachment to the nuclear envelope.

It localises to the cytoplasm. The protein resides in the cytoskeleton. The protein localises to the golgi apparatus. It is found in the nucleus. Essential for normal spermatogenesis and male fertility. Required for normal sperm head morphology, acroplaxome formation, acrosome attachment, and acrosome granule stability. May anchor and stabilize acrosomal adherence to the acroplaxome at least in part by facilitating the presence of F-actin in the subacrosomal space. May play an important role in formation and fusion of Golgi-derived vesicles during acrosome biogenesis. This chain is Actin-like protein 7A (ACTL7A), found in Bos taurus (Bovine).